The primary structure comprises 245 residues: Ribosomal RNA small subunit methyltransferase J (245 aa).

Residues 94–95 (RD), 110–111 (ER), and D164 contribute to the S-adenosyl-L-methionine site.

It belongs to the methyltransferase superfamily. RsmJ family.

The protein resides in the cytoplasm. The catalysed reaction is guanosine(1516) in 16S rRNA + S-adenosyl-L-methionine = N(2)-methylguanosine(1516) in 16S rRNA + S-adenosyl-L-homocysteine + H(+). In terms of biological role, specifically methylates the guanosine in position 1516 of 16S rRNA. The polypeptide is Ribosomal RNA small subunit methyltransferase J (Dechloromonas aromatica (strain RCB)).